Consider the following 258-residue polypeptide: Acyl-[acyl-carrier-protein]--UDP-N-acetylglucosamine O-acyltransferase (258 aa).

It belongs to the transferase hexapeptide repeat family. LpxA subfamily. As to quaternary structure, homotrimer.

Its subcellular location is the cytoplasm. The enzyme catalyses a (3R)-hydroxyacyl-[ACP] + UDP-N-acetyl-alpha-D-glucosamine = a UDP-3-O-[(3R)-3-hydroxyacyl]-N-acetyl-alpha-D-glucosamine + holo-[ACP]. The protein operates within glycolipid biosynthesis; lipid IV(A) biosynthesis; lipid IV(A) from (3R)-3-hydroxytetradecanoyl-[acyl-carrier-protein] and UDP-N-acetyl-alpha-D-glucosamine: step 1/6. Its function is as follows. Involved in the biosynthesis of lipid A, a phosphorylated glycolipid that anchors the lipopolysaccharide to the outer membrane of the cell. In Neisseria gonorrhoeae (strain ATCC 700825 / FA 1090), this protein is Acyl-[acyl-carrier-protein]--UDP-N-acetylglucosamine O-acyltransferase.